Reading from the N-terminus, the 920-residue chain is MKIEKLMALYGENGALLEELYNQYKLNPETLDKEWKSFFQEVDTNGLANGSGYTNGNGKSAVATSFTDAQAASIREMGIINLLNAYRRQGHLAAKLDPLGIQKPNRTFIDSKLHNISPADIDTVVDSETLGRVKLAEIVDLYEKVYCNTIGAEHFYLVNDEEREWLQKKMESPEFLAPLPRGIKLRLFEKLFQADYFETFLAKKYVGKKRFSLEGGESFIPLLDTIVEEAGYHQMDGLVIGMAHRGRLNVLVNIIEKPASLIFAEFEEKTDKDNLSYADVKYHLGYSNSRMTTSGKEVKLSLAFNPSHLECVDPVVTGSVRARQTLIGDKDRSKYMPILIHGDAAFAGQGVVAETLNLMNLEGYTTGGTFHIVVNNQIGFTTLPDESRSTLYATDLAKGFQIPIIHVNGDDPEAVYRVVKLGMEYRQKFKKDFIIDLVCYRRLGHNETDEPAFTQPKMYAIIKNHPPTVKLYEKRLVEEGDIPQEDIDFIKNGSMHGLEDSFQRAKEQDVKIRVDTMQGVWSKFSKDSLDSEPATKLLAEQMHGIVQALTSVPQGFTPNSKLVKLLQSRKEMAEGKIPVDWGFAEALSFGSILESGFRIRLSGQDSQRGTFSHRHAVLVDTNTNEKYIPLNHISSKQAKAEIINSSLSEFSVLGFEYGYSLSDPNALVMWEAQFGDFANSAQVIFDQFISSSEVKWQRLSGLIMLLPHGYEGQGPEHSSARLERFLQLCALDNMQVCNLTTAAQYFHLLRRQMLRNYRKPLVIVTPKSLLRFPASLSPVEDILQGAFREILIDDSGSKPDKIEKVVFSAGKVYYDLMKYKDENKIKNVALVRVEQIYPFPAKEIQSSLKTFKNAKQFVWCQEEPKNQGAWFFVRERIEELLPGNARLVYAGRHESPSPAAGHMKLHLQEQDQLVLDAFQA.

The protein belongs to the alpha-ketoglutarate dehydrogenase family. As to quaternary structure, homodimer. Part of the 2-oxoglutarate dehydrogenase (OGDH) complex composed of E1 (2-oxoglutarate dehydrogenase), E2 (dihydrolipoamide succinyltransferase) and E3 (dihydrolipoamide dehydrogenase); the complex contains multiple copies of the three enzymatic components (E1, E2 and E3). Requires thiamine diphosphate as cofactor.

The catalysed reaction is N(6)-[(R)-lipoyl]-L-lysyl-[protein] + 2-oxoglutarate + H(+) = N(6)-[(R)-S(8)-succinyldihydrolipoyl]-L-lysyl-[protein] + CO2. Functionally, E1 component of the 2-oxoglutarate dehydrogenase (OGDH) complex which catalyzes the decarboxylation of 2-oxoglutarate, the first step in the conversion of 2-oxoglutarate to succinyl-CoA and CO(2). This Leptospira interrogans serogroup Icterohaemorrhagiae serovar copenhageni (strain Fiocruz L1-130) protein is 2-oxoglutarate dehydrogenase E1 component.